The following is a 354-amino-acid chain: N-acetyl-gamma-glutamyl-phosphate reductase (354 aa).

Cys156 is an active-site residue.

This sequence belongs to the NAGSA dehydrogenase family. Type 1 subfamily.

It is found in the cytoplasm. The catalysed reaction is N-acetyl-L-glutamate 5-semialdehyde + phosphate + NADP(+) = N-acetyl-L-glutamyl 5-phosphate + NADPH + H(+). It participates in amino-acid biosynthesis; L-arginine biosynthesis; N(2)-acetyl-L-ornithine from L-glutamate: step 3/4. Catalyzes the NADPH-dependent reduction of N-acetyl-5-glutamyl phosphate to yield N-acetyl-L-glutamate 5-semialdehyde. The chain is N-acetyl-gamma-glutamyl-phosphate reductase from Bordetella pertussis (strain Tohama I / ATCC BAA-589 / NCTC 13251).